The primary structure comprises 1131 residues: Probable pre-mRNA-splicing factor ATP-dependent RNA helicase mog-1 (1131 aa).

Composition is skewed to basic and acidic residues over residues 1–12 (MSDKRADGRLEG), 65–122 (RGVT…DRSG), 139–148 (WDQDDREGSS), 160–173 (RGER…DSER), 180–225 (RSER…WEEE), and 407–416 (GNYKESHQFA). 2 disordered regions span residues 1-225 (MSDK…WEEE) and 389-416 (MGVK…HQFA). In terms of domain architecture, Helicase ATP-binding spans 451-614 (MNVIRENNVV…FGGNCPTFTI (164 aa)). 464–471 (GETGSGKT) is a binding site for ATP. Positions 561 to 564 (DEAH) match the DEAH box motif. Residues 629 to 812 (PVEDYVDAAV…NVVLLLKSLG (184 aa)) enclose the Helicase C-terminal domain. Basic and acidic residues-rich tracts occupy residues 1085 to 1114 (EMRE…RRVV) and 1121 to 1131 (ARSERRKLWGL). The disordered stretch occupies residues 1085–1131 (EMREAQKEMERRKEESDKAFKRPESSRRVVEVGSKSARSERRKLWGL).

The protein belongs to the DEAD box helicase family. DEAH subfamily. PRP16 sub-subfamily.

The protein resides in the nucleus. It carries out the reaction ATP + H2O = ADP + phosphate + H(+). Functionally, probable ATP-binding RNA helicase involved in pre-mRNA splicing. This is Probable pre-mRNA-splicing factor ATP-dependent RNA helicase mog-1 (mog-1) from Caenorhabditis elegans.